The sequence spans 1556 residues: Ubiquitin carboxyl-terminal hydrolase 47 (1556 aa).

A disordered region spans residues 117–231 (MKSDGEKAKS…AKKTAKVTSK (115 aa)). A compositionally biased stretch (low complexity) spans 146–156 (ASGSSSPSKAK). A phosphoserine mark is found at Ser-172 and Ser-173. Low complexity predominate over residues 180 to 189 (IKTTAAKISK). The span at 191–200 (GSEKAPRASP) shows a compositional bias: basic and acidic residues. The segment covering 208-219 (TEINSKNTSSES) has biased composition (polar residues). Phosphoserine is present on Ser-238. In terms of domain architecture, USP spans 396 to 779 (VGLVNQAMTC…NAYMLMYRQV (384 aa)). Cys-405 functions as the Nucleophile in the catalytic mechanism. Composition is skewed to polar residues over residues 628–642 (NRSG…QLNG) and 661–673 (LSSG…SSSQ). Residues 628 to 697 (NRSGNSGEQN…SSSTSKSAKQ (70 aa)) are disordered. The segment covering 688–697 (SSSTSKSAKQ) has biased composition (low complexity). His-720 acts as the Proton acceptor in catalysis. A disordered region spans residues 1087 to 1148 (EPMSQPSPSH…LSSPEDEAAS (62 aa)). Over residues 1109–1125 (DGDRTLVETDNMAHRGG) the composition is skewed to basic and acidic residues. Low complexity predominate over residues 1128–1141 (SQVSSTSHSPQLSS). 7 positions are modified to phosphoserine: Ser-1131, Ser-1132, Ser-1140, Ser-1141, Ser-1199, Ser-1201, and Ser-1205.

Belongs to the peptidase C19 family. Interacts with ttk.

The protein resides in the nucleus. It carries out the reaction Thiol-dependent hydrolysis of ester, thioester, amide, peptide and isopeptide bonds formed by the C-terminal Gly of ubiquitin (a 76-residue protein attached to proteins as an intracellular targeting signal).. Functionally, ubiquitin-specific protease that deubiquitinates target proteins to regulate different cellular and developmental pathways. Functions downstream of Dsor1/MEK to positively regulate the Ras/MAPK signaling pathway. Likely to modulate the pathway during various cellular and developmental processes including rl/MAPK activation by the receptors InR, Egfr and sevenless/sev. Functions in the post-translational stabilization of rl/MAPK levels in a mechanism that is independent of rl activity and opposes the activity of the E2 enzyme Unc6 and the putative E3 ligases poe, Ufd4 and Kcmf1, which mediate the ubiquitination and proteasomal degradation of rl. During eye development it may also act downstream of rl/MAPK to negatively regulate the Ras/MAPK signaling pathway by stabilizing the transcriptional repressor ttk and consequently inhibiting photoreceptor cell development. This suggests that at least during eye development, it may act in both the positive and negative regulation of the Ras/MAPK signaling pathway to mediate the development of different cell types. Positively regulates border follicle cell migration during oogenesis by mediating the deubiquitination and stabilization of slbo. In the wing disks it positively regulates wg signaling by stabilizing arm. Has an effect on position-effect variegation. The polypeptide is Ubiquitin carboxyl-terminal hydrolase 47 (Drosophila melanogaster (Fruit fly)).